Consider the following 91-residue polypeptide: Acyl carrier protein (91 aa).

In terms of domain architecture, Carrier spans 4–79 (QQILDKVQSI…QAVDYILQHK (76 aa)). Position 39 is an O-(pantetheine 4'-phosphoryl)serine (Ser-39).

The protein belongs to the acyl carrier protein (ACP) family. 4'-phosphopantetheine is transferred from CoA to a specific serine of apo-ACP by AcpS. This modification is essential for activity because fatty acids are bound in thioester linkage to the sulfhydryl of the prosthetic group.

The protein localises to the plastid. It is found in the chloroplast. It participates in lipid metabolism; fatty acid biosynthesis. Functionally, carrier of the growing fatty acid chain in fatty acid biosynthesis. The polypeptide is Acyl carrier protein (Cyanidioschyzon merolae (strain NIES-3377 / 10D) (Unicellular red alga)).